The sequence spans 1357 residues: DNA-directed RNA polymerase subunit beta (1357 aa).

This sequence belongs to the RNA polymerase beta chain family. As to quaternary structure, the RNAP catalytic core consists of 2 alpha, 1 beta, 1 beta' and 1 omega subunit. When a sigma factor is associated with the core the holoenzyme is formed, which can initiate transcription.

The enzyme catalyses RNA(n) + a ribonucleoside 5'-triphosphate = RNA(n+1) + diphosphate. In terms of biological role, DNA-dependent RNA polymerase catalyzes the transcription of DNA into RNA using the four ribonucleoside triphosphates as substrates. The polypeptide is DNA-directed RNA polymerase subunit beta (Hahella chejuensis (strain KCTC 2396)).